A 509-amino-acid chain; its full sequence is MDRSSAVGGCGGGGGLGVGVVTSSATALGPGGLTNGGGGVVSGALNGLEAMSAESTGLCLQDLVSAGTANGAGSAGSAESATTTSTALSSGSTGSSTVNGGGSSTSGTEHLHSHHSLHDSSSSVSISPAISSLMPISSLSHLHHSAGQDLVGGYSQHPHHTVVPPHTPKHEPLEKLRIWAETGDFRDSHSSMTAVANSLDSTHLNNFQTSSTSSISNRSRDRKDGNRSVNETTIKTENISSSGHDEPMTTSGEEPKNDKKNKRQRRQRTHFTSQQLQELEHTFSRNRYPDMSTREEIAMWTNLTEARVRVWFKNRRAKWRKRERNAMNAAVAAADFKSGFGTQFMQPFADDSLYSSYPYNNWTKVPSPLGTKPFPWPVNPLGSMVAGNHHQNSVNCFNTGASGVAVSMNNASMLPGSMGSSLSNTSNVGAVGAPCPYTTPANPYMYRSAAEPCMSSSMSSSIATLRLKAKQHASAGFGSPYSAPSPVSRSNSAGLSACQYTGVGVTDVV.

A compositionally biased stretch (low complexity) spans 70-98; that stretch reads NGAGSAGSAESATTTSTALSSGSTGSSTV. Disordered regions lie at residues 70–125, 148–171, and 204–273; these read NGAG…SSVS, QDLVGGYSQHPHHTVVPPHTPKHE, and LNNF…HFTS. Residues 227–242 are compositionally biased toward polar residues; it reads RSVNETTIKTENISSS. Over residues 243–258 the composition is skewed to basic and acidic residues; sequence GHDEPMTTSGEEPKND. Residues 259–269 show a composition bias toward basic residues; that stretch reads KKNKRQRRQRT. The homeobox DNA-binding region spans 262 to 322; that stretch reads KRQRRQRTHF…KNRRAKWRKR (61 aa). The OAR signature appears at 460–473; it reads SSIATLRLKAKQHA. The Nuclear localization signal motif lies at 464–470; sequence TLRLKAK.

Belongs to the paired homeobox family. Bicoid subfamily.

Its subcellular location is the nucleus. Appears to control physiological cell functions rather than pattern formation during embryogenesis. The protein is Pituitary homeobox homolog Ptx1 (Ptx1) of Drosophila melanogaster (Fruit fly).